A 420-amino-acid polypeptide reads, in one-letter code: MDFLRIEGGKTLNGSVPISGAKNAALPLIASTILSKQSVQIDNLPDVQDIKTLLRLLQNLGASYQYEDGLATIDASKLTSTVATYDIVRTMRASILVLGPILAKYGRCEVSLPGGCAIGQRPIDLHLQALEQMGAKITIKAGYVVAEAPNGLKGSTIIFDKITVTGTENIVMAAALAKGTTTIINAAKEPEVVQLCEVLKDAGVQIDGIGSDELIIEGTDREPIEMRAIHVIPDRIEAGTYLCAGAITNSTLSIENVIPHHLDSVLVKLKQMGFPLDVNESNITIHPARTIEPVEIVTSEYPGFPTDMQAQFMALALLANGASIIEERLFENRFMHVSELKRFGANIQLKGNIATVIGPTELWGADVMATDLRASSALVLAGLAAKGTTNVHRIYHLDRGYEKLEEKLNALGANIQRLSE.

22–23 lines the phosphoenolpyruvate pocket; the sequence is KN. Arg-92 contributes to the UDP-N-acetyl-alpha-D-glucosamine binding site. Cys-116 (proton donor) is an active-site residue. 2-(S-cysteinyl)pyruvic acid O-phosphothioketal is present on Cys-116. UDP-N-acetyl-alpha-D-glucosamine contacts are provided by residues 121 to 125, Asp-307, and Leu-329; that span reads RPIDL.

Belongs to the EPSP synthase family. MurA subfamily.

It is found in the cytoplasm. It carries out the reaction phosphoenolpyruvate + UDP-N-acetyl-alpha-D-glucosamine = UDP-N-acetyl-3-O-(1-carboxyvinyl)-alpha-D-glucosamine + phosphate. The protein operates within cell wall biogenesis; peptidoglycan biosynthesis. Functionally, cell wall formation. Adds enolpyruvyl to UDP-N-acetylglucosamine. The chain is UDP-N-acetylglucosamine 1-carboxyvinyltransferase from Nitratiruptor sp. (strain SB155-2).